Reading from the N-terminus, the 158-residue chain is NAD(P)H-quinone oxidoreductase subunit J, chloroplastic (158 aa).

This sequence belongs to the complex I 30 kDa subunit family. As to quaternary structure, NDH is composed of at least 16 different subunits, 5 of which are encoded in the nucleus.

It localises to the plastid. The protein resides in the chloroplast thylakoid membrane. It carries out the reaction a plastoquinone + NADH + (n+1) H(+)(in) = a plastoquinol + NAD(+) + n H(+)(out). The enzyme catalyses a plastoquinone + NADPH + (n+1) H(+)(in) = a plastoquinol + NADP(+) + n H(+)(out). NDH shuttles electrons from NAD(P)H:plastoquinone, via FMN and iron-sulfur (Fe-S) centers, to quinones in the photosynthetic chain and possibly in a chloroplast respiratory chain. The immediate electron acceptor for the enzyme in this species is believed to be plastoquinone. Couples the redox reaction to proton translocation, and thus conserves the redox energy in a proton gradient. The polypeptide is NAD(P)H-quinone oxidoreductase subunit J, chloroplastic (Cicer arietinum (Chickpea)).